A 205-amino-acid chain; its full sequence is DNA-directed RNA polymerase RPB5 homolog (205 aa).

This sequence belongs to the archaeal RpoH/eukaryotic RPB5 RNA polymerase subunit family. In terms of assembly, part of the viral DNA-directed RNA polymerase that consists of 8 polII-like subunits (RPB1, RPB2, RPB3, RPB5, RPB6, RPB7, RPB9, RPB10), a capping enzyme and a termination factor.

Its subcellular location is the host cytoplasm. It localises to the virion. Functionally, component of the DNA-directed RNA polymerase (RNAP) that catalyzes the transcription in the cytoplasm of viral DNA into RNA using the four ribonucleoside triphosphates as substrates. This Ornithodoros (relapsing fever ticks) protein is DNA-directed RNA polymerase RPB5 homolog.